Reading from the N-terminus, the 390-residue chain is Nuclear receptor subfamily 2 group F member 6 (390 aa).

Residues 1–15 (MAMVTGGWGDPGGDT) are compositionally biased toward gly residues. A disordered region spans residues 1 to 50 (MAMVTGGWGDPGGDTNGVDKAGGSYPRATEDDSASPPGATSDAEPGDEER). A phosphoserine mark is found at S35 and S41. The segment at residues 54-129 (QVDCVVCGDK…VGMRKEAVQR (76 aa)) is a DNA-binding region (nuclear receptor). The NR C4-type zinc finger occupies 57–77 (CVVCGDKSSGKHYGVFTCEGC). Position 84 is a phosphoserine (S84). Residues 93 to 117 (CRSNRDCQIDQHHRNQCQYCRLKKC) form an NR C4-type zinc finger. An NR LBD domain is found at 157 to 380 (PVSELIAQLL…TLIRDMLLSG (224 aa)). The important for dimerization stretch occupies residues 314–390 (LQEKAQVALT…STFNWPYGSG (77 aa)).

This sequence belongs to the nuclear hormone receptor family. NR2 subfamily. In terms of assembly, binds DNA as dimer; homodimer and heterodimer with NR2F2 and probably NR2F1. Interacts with THRB.

It localises to the nucleus. Transcription factor predominantly involved in transcriptional repression. Binds to promoter/enhancer response elements that contain the imperfect 5'-AGGTCA-3' direct or inverted repeats with various spacings which are also recognized by other nuclear hormone receptors. Involved in modulation of hormonal responses. Represses transcriptional activity of the lutropin-choriogonadotropic hormone receptor/LHCGR gene, the renin/REN gene and the oxytocin-neurophysin/OXT gene. Represses the triiodothyronine-dependent and -independent transcriptional activity of the thyroid hormone receptor gene in a cell type-specific manner. The corepressing function towards thyroid hormone receptor beta/THRB involves at least in part the inhibition of THRB binding to triiodothyronine response elements (TREs) by NR2F6. Inhibits NFATC transcription factor DNA binding and subsequently its transcriptional activity. Acts as transcriptional repressor of IL-17 expression in Th-17 differentiated CD4(+) T cells and may be involved in induction and/or maintenance of peripheral immunological tolerance and autoimmunity. Involved in development of forebrain circadian clock; is required early in the development of the locus coeruleus (LC). In Mus musculus (Mouse), this protein is Nuclear receptor subfamily 2 group F member 6 (Nr2f6).